The following is a 196-amino-acid chain: Holliday junction resolvase RecU (196 aa).

Mg(2+) is bound by residues Thr-82, Asp-84, Glu-97, and Gln-116.

It belongs to the RecU family. Mg(2+) serves as cofactor.

It localises to the cytoplasm. It catalyses the reaction Endonucleolytic cleavage at a junction such as a reciprocal single-stranded crossover between two homologous DNA duplexes (Holliday junction).. Endonuclease that resolves Holliday junction intermediates in genetic recombination. Cleaves mobile four-strand junctions by introducing symmetrical nicks in paired strands. Promotes annealing of linear ssDNA with homologous dsDNA. Required for DNA repair, homologous recombination and chromosome segregation. The polypeptide is Holliday junction resolvase RecU (Oceanobacillus iheyensis (strain DSM 14371 / CIP 107618 / JCM 11309 / KCTC 3954 / HTE831)).